Here is a 286-residue protein sequence, read N- to C-terminus: MSDIEEGTPTNNGQQKERRKIEIKFIENKTRRHVTFSKRKHGIMKKAFELSVLTGTQVLLLVVSETGLVYTFSTPKFEPIVTQQEGRNLIQACLNAPDDEEEDEEEDGDDDDDDDDDGNDMQRQQPQQQQPQQQQQVLNAHANSLGHLNQDQVPAGALKQEVKSQLLGGANPNQNSMIQQQQHHTQNSQPQQQQQQQPQQQMSQQQMSQHPRPQQGIPHPQQSQPQQQQQQQQQLQQQQQQQQQQPLTGIHQPHQQAFANAASPYLNAEQNAAYQQYFQEPQQGQY.

Residue serine 2 is modified to N-acetylserine. The residue at position 2 (serine 2) is a Phosphoserine. The MADS-box domain occupies 18–72; the sequence is RRKIEIKFIENKTRRHVTFSKRKHGIMKKAFELSVLTGTQVLLLVVSETGLVYTF. Residues 97-119 are compositionally biased toward acidic residues; the sequence is PDDEEEDEEEDGDDDDDDDDDGN. The disordered stretch occupies residues 97–137; it reads PDDEEEDEEEDGDDDDDDDDDGNDMQRQQPQQQQPQQQQQV. Over residues 122–136 the composition is skewed to low complexity; sequence QRQQPQQQQPQQQQQ. Serine 144 bears the Phosphoserine mark. Residues 167–264 are disordered; sequence LGGANPNQNS…QQAFANAASP (98 aa). Low complexity predominate over residues 171-246; the sequence is NPNQNSMIQQ…QQQQQQQQQP (76 aa).

Homodimer. Binds DNA with a high specificity in complex with mating-type protein ALPHA1. Also binds DNA with a high specificity as a heterotetramer consisting of an ALPHA2 dimer and an MCM1 dimer. Interacts with YHP1 and YOX1, possibly leading to its inactivation. Interacts with ARG80 and ARG82.

The protein resides in the nucleus. Functionally, transcription factor required for the efficient replication of minichromosomes and the transcriptional regulation of early cell cycle genes. Activates transcription of ECB-dependent genes during the G1/M phase. Genes that contain a ECB (early cell box) element in their transcription regulatory region are transcribed only during G1/M phases. Interacts with the alpha-2 repressor or with the alpha-1 activator thereby regulating the expression of mating-type-specific genes. With ARG80, ARG81 and ARG82, coordinates the expression of arginine anabolic and catabolic genes in response to arginine. This chain is Pheromone receptor transcription factor (MCM1), found in Saccharomyces cerevisiae (strain ATCC 204508 / S288c) (Baker's yeast).